Reading from the N-terminus, the 287-residue chain is Inositol diphosphatase siw14 (287 aa).

The Tyrosine-protein phosphatase domain occupies 85-256 (NFGVVYPGII…LNDLKRYISD (172 aa)). Phosphoserine occurs at positions 156 and 159. The active-site Phosphocysteine intermediate is the C189.

Belongs to the protein-tyrosine phosphatase family. Atypical dual-specificity phosphatase Siw14-like subfamily.

It localises to the cytoplasm. The protein localises to the nucleus. The catalysed reaction is 5-diphospho-1D-myo-inositol 1,2,3,4,6-pentakisphosphate + H2O = 1D-myo-inositol hexakisphosphate + phosphate + H(+). It catalyses the reaction 1-diphospho-1D-myo-inositol 2,3,4,5,6-pentakisphosphate + H2O = 1D-myo-inositol hexakisphosphate + phosphate + H(+). The enzyme catalyses 1,5-bis(diphospho)-1D-myo-inositol 2,3,4,6-tetrakisphosphate + H2O = 1-diphospho-1D-myo-inositol 2,3,4,5,6-pentakisphosphate + phosphate + 2 H(+). Activity is inhibited by the reaction product inorganic phosphate and by sulfate (a phosphate mimetic). Not inhibited by magnesium. Functionally, cleaves the beta-phosphate at the 1- and 5-position of soluble inositol pyrophosphates. Has exopolyphosphatase activity in vitro but does not appear to contribute to the homeostasis of cellular polyphosphate. In Schizosaccharomyces pombe (strain 972 / ATCC 24843) (Fission yeast), this protein is Inositol diphosphatase siw14.